Reading from the N-terminus, the 233-residue chain is EEF1A lysine methyltransferase 2 (233 aa).

Belongs to the class I-like SAM-binding methyltransferase superfamily. EFM4 family.

Its subcellular location is the cytoplasm. The protein resides in the nucleus. It catalyses the reaction L-lysyl-[protein] + 3 S-adenosyl-L-methionine = N(6),N(6),N(6)-trimethyl-L-lysyl-[protein] + 3 S-adenosyl-L-homocysteine + 3 H(+). Its function is as follows. Protein-lysine methyltransferase that selectively catalyzes the trimethylation of EEF1A at 'Lys-318'. This chain is EEF1A lysine methyltransferase 2, found in Danio rerio (Zebrafish).